Reading from the N-terminus, the 408-residue chain is Energy-coupling factor transporter ATP-binding protein EcfA1 (408 aa).

One can recognise an ABC transporter domain in the interval 140–374; sequence IEIKNLSFKY…KEFLRNIQLD (235 aa). 174-181 provides a ligand contact to ATP; the sequence is GHNGSGKS.

It belongs to the ABC transporter superfamily. Energy-coupling factor EcfA family. As to quaternary structure, forms a stable energy-coupling factor (ECF) transporter complex composed of 2 membrane-embedded substrate-binding proteins (S component), 2 ATP-binding proteins (A component) and 2 transmembrane proteins (T component).

Its subcellular location is the cell membrane. In terms of biological role, ATP-binding (A) component of a common energy-coupling factor (ECF) ABC-transporter complex. Unlike classic ABC transporters this ECF transporter provides the energy necessary to transport a number of different substrates. This chain is Energy-coupling factor transporter ATP-binding protein EcfA1, found in Mycoplasma capricolum subsp. capricolum (strain California kid / ATCC 27343 / NCTC 10154).